Consider the following 215-residue polypeptide: 3-isopropylmalate dehydratase small subunit (215 aa).

The protein belongs to the LeuD family. LeuD type 1 subfamily. As to quaternary structure, heterodimer of LeuC and LeuD.

It catalyses the reaction (2R,3S)-3-isopropylmalate = (2S)-2-isopropylmalate. It functions in the pathway amino-acid biosynthesis; L-leucine biosynthesis; L-leucine from 3-methyl-2-oxobutanoate: step 2/4. In terms of biological role, catalyzes the isomerization between 2-isopropylmalate and 3-isopropylmalate, via the formation of 2-isopropylmaleate. This is 3-isopropylmalate dehydratase small subunit from Xylella fastidiosa (strain 9a5c).